The chain runs to 284 residues: D-tagatose-1,6-bisphosphate aldolase subunit GatY (284 aa).

D82 functions as the Proton donor in the catalytic mechanism. Zn(2+) contacts are provided by H83 and H180. G181 lines the dihydroxyacetone phosphate pocket. H208 contributes to the Zn(2+) binding site. Residues 209–211 and 230–233 contribute to the dihydroxyacetone phosphate site; these read GAS and NVAT.

The protein belongs to the class II fructose-bisphosphate aldolase family. TagBP aldolase GatY subfamily. As to quaternary structure, forms a complex with GatZ. It depends on Zn(2+) as a cofactor.

It carries out the reaction D-tagatofuranose 1,6-bisphosphate = D-glyceraldehyde 3-phosphate + dihydroxyacetone phosphate. The protein operates within carbohydrate metabolism; D-tagatose 6-phosphate degradation; D-glyceraldehyde 3-phosphate and glycerone phosphate from D-tagatose 6-phosphate: step 2/2. Catalytic subunit of the tagatose-1,6-bisphosphate aldolase GatYZ, which catalyzes the reversible aldol condensation of dihydroxyacetone phosphate (DHAP or glycerone-phosphate) with glyceraldehyde 3-phosphate (G3P) to produce tagatose 1,6-bisphosphate (TBP). Requires GatZ subunit for full activity and stability. Is involved in the catabolism of galactitol. The protein is D-tagatose-1,6-bisphosphate aldolase subunit GatY of Escherichia coli O8 (strain IAI1).